Reading from the N-terminus, the 173-residue chain is MSALVCVARIGAAHGVRGAVKLWTFTEDPFAIKRYGPLLSKDGKRQFEVAQAREAKDHLVATFKGVTTRDEAERLNGIELYVAREKLPATDEDEYYHTDLIGLAAVTTDGEPLGRVLAIHNFGAGDIIEIAPPKGASLLLPFSNAVVPEVDVAGGRVVVALPQEIAGDEAEER.

The region spanning 92 to 165 is the PRC barrel domain; it reads EDEYYHTDLI…RVVVALPQEI (74 aa).

It belongs to the RimM family. Binds ribosomal protein uS19.

Its subcellular location is the cytoplasm. Functionally, an accessory protein needed during the final step in the assembly of 30S ribosomal subunit, possibly for assembly of the head region. Essential for efficient processing of 16S rRNA. May be needed both before and after RbfA during the maturation of 16S rRNA. It has affinity for free ribosomal 30S subunits but not for 70S ribosomes. This is Ribosome maturation factor RimM from Bradyrhizobium diazoefficiens (strain JCM 10833 / BCRC 13528 / IAM 13628 / NBRC 14792 / USDA 110).